The chain runs to 81 residues: Conotoxin Vc6.13 (81 aa).

The first 19 residues, 1–19 (MEKLTILLLVAAVLMSIQA), serve as a signal peptide directing secretion. A propeptide spanning residues 20 to 44 (LNQEQHQRAKINLLSKRKAPAERWW) is cleaved from the precursor. Disulfide bonds link Cys-49–Cys-63, Cys-56–Cys-67, and Cys-62–Cys-72.

Belongs to the conotoxin O2 superfamily. In terms of tissue distribution, expressed by the venom duct.

The protein resides in the secreted. Inhibits voltage-gated ion channels. The chain is Conotoxin Vc6.13 from Conus victoriae (Queen Victoria cone).